Here is a 404-residue protein sequence, read N- to C-terminus: Phosphopentomutase (404 aa).

Residues D10, D303, H308, D344, H345, and H356 each contribute to the Mn(2+) site.

The protein belongs to the phosphopentomutase family. Mn(2+) serves as cofactor.

It localises to the cytoplasm. It catalyses the reaction 2-deoxy-alpha-D-ribose 1-phosphate = 2-deoxy-D-ribose 5-phosphate. It carries out the reaction alpha-D-ribose 1-phosphate = D-ribose 5-phosphate. The protein operates within carbohydrate degradation; 2-deoxy-D-ribose 1-phosphate degradation; D-glyceraldehyde 3-phosphate and acetaldehyde from 2-deoxy-alpha-D-ribose 1-phosphate: step 1/2. Its function is as follows. Isomerase that catalyzes the conversion of deoxy-ribose 1-phosphate (dRib-1-P) and ribose 1-phosphate (Rib-1-P) to deoxy-ribose 5-phosphate (dRib-5-P) and ribose 5-phosphate (Rib-5-P), respectively. This Shewanella baltica (strain OS185) protein is Phosphopentomutase.